Reading from the N-terminus, the 314-residue chain is 4-hydroxy-3-methylbut-2-enyl diphosphate reductase (314 aa).

Cysteine 12 contacts [4Fe-4S] cluster. Residues histidine 41 and histidine 74 each coordinate (2E)-4-hydroxy-3-methylbut-2-enyl diphosphate. Dimethylallyl diphosphate contacts are provided by histidine 41 and histidine 74. Histidine 41 and histidine 74 together coordinate isopentenyl diphosphate. Position 96 (cysteine 96) interacts with [4Fe-4S] cluster. Histidine 124 provides a ligand contact to (2E)-4-hydroxy-3-methylbut-2-enyl diphosphate. Dimethylallyl diphosphate is bound at residue histidine 124. Isopentenyl diphosphate is bound at residue histidine 124. The Proton donor role is filled by glutamate 126. (2E)-4-hydroxy-3-methylbut-2-enyl diphosphate is bound at residue threonine 167. Residue cysteine 197 coordinates [4Fe-4S] cluster. Residues serine 225, serine 226, asparagine 227, and serine 269 each coordinate (2E)-4-hydroxy-3-methylbut-2-enyl diphosphate. 4 residues coordinate dimethylallyl diphosphate: serine 225, serine 226, asparagine 227, and serine 269. Residues serine 225, serine 226, asparagine 227, and serine 269 each coordinate isopentenyl diphosphate.

The protein belongs to the IspH family. [4Fe-4S] cluster serves as cofactor.

The catalysed reaction is isopentenyl diphosphate + 2 oxidized [2Fe-2S]-[ferredoxin] + H2O = (2E)-4-hydroxy-3-methylbut-2-enyl diphosphate + 2 reduced [2Fe-2S]-[ferredoxin] + 2 H(+). It carries out the reaction dimethylallyl diphosphate + 2 oxidized [2Fe-2S]-[ferredoxin] + H2O = (2E)-4-hydroxy-3-methylbut-2-enyl diphosphate + 2 reduced [2Fe-2S]-[ferredoxin] + 2 H(+). Its pathway is isoprenoid biosynthesis; dimethylallyl diphosphate biosynthesis; dimethylallyl diphosphate from (2E)-4-hydroxy-3-methylbutenyl diphosphate: step 1/1. It participates in isoprenoid biosynthesis; isopentenyl diphosphate biosynthesis via DXP pathway; isopentenyl diphosphate from 1-deoxy-D-xylulose 5-phosphate: step 6/6. Its function is as follows. Catalyzes the conversion of 1-hydroxy-2-methyl-2-(E)-butenyl 4-diphosphate (HMBPP) into a mixture of isopentenyl diphosphate (IPP) and dimethylallyl diphosphate (DMAPP). Acts in the terminal step of the DOXP/MEP pathway for isoprenoid precursor biosynthesis. This chain is 4-hydroxy-3-methylbut-2-enyl diphosphate reductase, found in Glaesserella parasuis serovar 5 (strain SH0165) (Haemophilus parasuis).